We begin with the raw amino-acid sequence, 137 residues long: Basic phospholipase A2 3 (137 aa).

Positions 1–11 are cleaved as a signal peptide; the sequence is LVAVCVSLLGA. Residues 12–19 constitute a propeptide that is removed on maturation; that stretch reads ANIPPQPL. Disulfide bonds link Cys-30-Cys-89, Cys-44-Cys-136, Cys-46-Cys-62, Cys-61-Cys-117, Cys-68-Cys-110, Cys-78-Cys-103, and Cys-96-Cys-108. Residues Tyr-45, Gly-47, and Gly-49 each coordinate Ca(2+). The active site involves His-65. Asp-66 contacts Ca(2+). Asp-111 is a catalytic residue.

It belongs to the phospholipase A2 family. Group I subfamily. D49 sub-subfamily. Monomer, or homotrimer. Was firstly described as a trimer, but has been reinterpreted with the possibility of being a monomer. It depends on Ca(2+) as a cofactor. Expressed by the venom gland.

Its subcellular location is the secreted. The enzyme catalyses a 1,2-diacyl-sn-glycero-3-phosphocholine + H2O = a 1-acyl-sn-glycero-3-phosphocholine + a fatty acid + H(+). In terms of biological role, snake venom phospholipase A2 (PLA2) that shows anticoagulant and neurotoxic activities. PLA2 catalyzes the calcium-dependent hydrolysis of the 2-acyl groups in 3-sn-phosphoglycerides. The chain is Basic phospholipase A2 3 from Bungarus caeruleus (Indian krait).